Here is a 286-residue protein sequence, read N- to C-terminus: Protein PXR1 (286 aa).

Residues 1–20 (MGLAGTKVKQRFGLDPRNTS) are disordered. In terms of domain architecture, G-patch spans 25–71 (KSRFGHRYLESMGWAPGKGLGLVEHATTTHVKVSVKDDTVGLGAKLA). Residues 148-255 (EDESEVNFKS…PRKHDQISNV (108 aa)) form a disordered region. A compositionally biased stretch (basic and acidic residues) spans 168-198 (PSRDSTSHAKRMRGDESKKSTRDQSKQERKE). Positions 199–230 (KKIKTEKKEKKEKKEKKEKKEKKEKKEKKEKK) are enriched in basic residues.

The protein belongs to the PINX1 family.

It localises to the nucleus. Its subcellular location is the nucleolus. Its function is as follows. Involved in rRNA-processing at A0, A1 and A2 sites and negatively regulates telomerase. This is Protein PXR1 (PXR1) from Meyerozyma guilliermondii (strain ATCC 6260 / CBS 566 / DSM 6381 / JCM 1539 / NBRC 10279 / NRRL Y-324) (Yeast).